We begin with the raw amino-acid sequence, 575 residues long: MRLSRYYAPTLKETPAEAEVISHKLLLRAGMIRKLTAGIYTYLPLGLKALNNVAKIVREEMDRAGALEILMPAVQPADLWKESGRWDFYGRELLRFVDRHDRESCLGPTHEEVVTDLVRHEIRSYRQLPVNLYQIQTKFRDEIRPRFGLMRGREFVMKDAYSFDKDDSGADASYWGMYEAYARIFKRLGLKFRAVAADSGAIGGSFSHEFMVLADTGEDTIVACPACDYGANVEKAEAICPPAGDLAPCPAAEKIATPGQHTVEELAAFLKVPVASVIKTLLYVADGKTVAALVRGDRELNEVKFKNLLDAKEDLRLATPEEVTAATGAPVGFAGPVGLSLPVYADRELALANDWVVGANAADAHLLHVDLGRDANVVSYTDLREVAPGDPCPKCGALLDFTKGIEVGHVFKLGLKYSKALNATFLDEAGKEQFMIMGCYGIGVSRIVASAIEQNHDDGGIVFPPTIAPFEAALINLSPKDETACAKADEIYAALTAAGIETLLDDRDERPGVKFKDADLMGHPIQLTLGGKGLARGIVETKDRRTGEKGELPLEGFFEAFAAWRAGVREGWGLE.

This sequence belongs to the class-II aminoacyl-tRNA synthetase family. ProS type 1 subfamily. As to quaternary structure, homodimer.

It localises to the cytoplasm. The enzyme catalyses tRNA(Pro) + L-proline + ATP = L-prolyl-tRNA(Pro) + AMP + diphosphate. In terms of biological role, catalyzes the attachment of proline to tRNA(Pro) in a two-step reaction: proline is first activated by ATP to form Pro-AMP and then transferred to the acceptor end of tRNA(Pro). As ProRS can inadvertently accommodate and process non-cognate amino acids such as alanine and cysteine, to avoid such errors it has two additional distinct editing activities against alanine. One activity is designated as 'pretransfer' editing and involves the tRNA(Pro)-independent hydrolysis of activated Ala-AMP. The other activity is designated 'posttransfer' editing and involves deacylation of mischarged Ala-tRNA(Pro). The misacylated Cys-tRNA(Pro) is not edited by ProRS. In Solidesulfovibrio magneticus (strain ATCC 700980 / DSM 13731 / RS-1) (Desulfovibrio magneticus), this protein is Proline--tRNA ligase.